Here is a 181-residue protein sequence, read N- to C-terminus: 30 kDa heat shock protein (181 aa).

The 149-residue stretch at 33–181 folds into the sHSP domain; it reads ASVQSFAPRF…PPTAKKITIQ (149 aa). Over residues 79-115 the composition is skewed to basic and acidic residues; it reads GRSEREYHSSSDDNKNDQADTENQARGESSEVAKTGE. Residues 79-127 form a disordered region; sequence GRSEREYHSSSDDNKNDQADTENQARGESSEVAKTGEKQVSTKKAANKS.

This sequence belongs to the small heat shock protein (HSP20) family.

This chain is 30 kDa heat shock protein (hsp30), found in Emericella nidulans (strain FGSC A4 / ATCC 38163 / CBS 112.46 / NRRL 194 / M139) (Aspergillus nidulans).